A 644-amino-acid chain; its full sequence is Chaperone protein HtpG (644 aa).

The tract at residues 1-352 (MNARVEQLEF…AQDMSLNVSR (352 aa)) is a; substrate-binding. The tract at residues 353–566 (EILQQDRQIK…AFGITPALAR (214 aa)) is b. Residues 567 to 644 (LYRASGQDIP…ILADRLARTL (78 aa)) are c.

This sequence belongs to the heat shock protein 90 family. As to quaternary structure, homodimer.

It is found in the cytoplasm. In terms of biological role, molecular chaperone. Has ATPase activity. The sequence is that of Chaperone protein HtpG from Mycolicibacterium paratuberculosis (strain ATCC BAA-968 / K-10) (Mycobacterium paratuberculosis).